The following is a 133-amino-acid chain: Small ribosomal subunit protein eS24y (133 aa).

Residues 104-133 (KSRKQIKERKNRAKKIRGVKKTKAGDTKKK) are disordered. Positions 109-125 (IKERKNRAKKIRGVKKT) are enriched in basic residues.

Belongs to the eukaryotic ribosomal protein eS24 family.

The chain is Small ribosomal subunit protein eS24y (RPS24B) from Arabidopsis thaliana (Mouse-ear cress).